A 550-amino-acid chain; its full sequence is Arginine--tRNA ligase (550 aa).

The 'HIGH' region signature appears at 130 to 140 (ANPTGPIHLGG).

It belongs to the class-I aminoacyl-tRNA synthetase family. Monomer.

It localises to the cytoplasm. The catalysed reaction is tRNA(Arg) + L-arginine + ATP = L-arginyl-tRNA(Arg) + AMP + diphosphate. This Rhodococcus opacus (strain B4) protein is Arginine--tRNA ligase.